A 45-amino-acid polypeptide reads, in one-letter code: Large ribosomal subunit protein bL34 (45 aa).

The interval 23–45 (ETPGGKKVLSARRAKGRKNLIAK) is disordered. A compositionally biased stretch (basic residues) spans 31-45 (LSARRAKGRKNLIAK).

It belongs to the bacterial ribosomal protein bL34 family.

The polypeptide is Large ribosomal subunit protein bL34 (Elusimicrobium minutum (strain Pei191)).